The primary structure comprises 300 residues: Acetaldehyde dehydrogenase (300 aa).

11–14 contacts NAD(+); it reads SGNI. C129 acts as the Acyl-thioester intermediate in catalysis. Residues 160–168 and N271 each bind NAD(+); that span reads SVGPGTRQN.

It belongs to the acetaldehyde dehydrogenase family.

The enzyme catalyses acetaldehyde + NAD(+) + CoA = acetyl-CoA + NADH + H(+). This chain is Acetaldehyde dehydrogenase (mhpF), found in Pseudoalteromonas translucida (strain TAC 125).